The primary structure comprises 1345 residues: Major capsid protein (1345 aa).

It belongs to the herpesviridae major capsid protein family. As to quaternary structure, homomultimer. Makes the hexons and eleven out of twelve pentons. Interacts with triplex proteins 1/TRX1 and 2/TRX2; adjacent capsomers are linked together in groups of three by triplexes, heterotrimeric complexes composed of one molecule of TRX1 and two molecules of TRX2. Interacts with scaffold protein; this interaction allows efficient MCP transport to the host nucleus. Interacts with capsid vertex component 2/CVC2. Interacts with the small capsomere-interacting protein/SCP.

Its subcellular location is the virion. It is found in the host nucleus. Its function is as follows. Self-assembles to form an icosahedral capsid with a T=16 symmetry, about 200 nm in diameter, and consisting of 150 hexons and 12 pentons (total of 162 capsomers). Hexons form the edges and faces of the capsid and are each composed of six MCP molecules. In contrast, one penton is found at each of the 12 vertices. Eleven of the pentons are MCP pentamers, while the last vertex is occupied by the portal complex. The capsid is surrounded by a layer of proteinaceous material designated the tegument which, in turn, is enclosed in an envelope of host cell-derived lipids containing virus-encoded glycoproteins. This is Major capsid protein from Human herpesvirus 6A (strain Uganda-1102) (HHV-6 variant A).